The following is a 766-amino-acid chain: Signal transducer and activator of transcription 3.2 (766 aa).

An Essential for nuclear import motif is present at residues 150–162; it reads DVRKKVQDLEQKM. Positions 580 to 670 constitute an SH2 domain; sequence WNEGYIIGFI…DATNILVSPL (91 aa). Residue S725 is modified to Phosphoserine; by NLK.

Belongs to the transcription factor STAT family. As to quaternary structure, forms a homodimer or a heterodimer with a related family member. Interacts with nlk.2. Phosphorylation of both tyrosine and serine residues, together with dimerization, is required for mesoderm induction.

Its subcellular location is the cytoplasm. It localises to the nucleus. Its function is as follows. Transcription factor that binds to target promoter sequences and activates transcription upon il6st/gp130 stimulation. Mediates ventralization of embryos, at least in part via inhibition of smad2 signaling. Required for hairy2 to induce dll1/delta1 and promote neural crest cell proliferation and differentiation. Involved in TGFbeta-mediated mesoderm induction in early embryos, acting downstream of map3k7/tak1 and nlk.2. The polypeptide is Signal transducer and activator of transcription 3.2 (stat3.2) (Xenopus laevis (African clawed frog)).